The chain runs to 189 residues: uncharacterized protein (189 aa).

The first 19 residues, 1-19 (MNKLTILFLILALISVIYA), serve as a signal peptide directing secretion. Positions 24-189 (PSSSEDSSSN…GSGSSGTVYY (166 aa)) are disordered. Low complexity predominate over residues 25–69 (SSSEDSSSNDSNSQVTGSQSYSGSQSDSNSGSESHTINTGSSYSG). A compositionally biased stretch (gly residues) spans 70-101 (SGSGSSGISGGSGSGSGSGSGSGSGSGSGSGA). The segment covering 102 to 142 (VSGSQSGSGAVSGSQSGSGAVSGSQSGVQTGSQSGAGSASG) has biased composition (low complexity). Polar residues predominate over residues 144 to 157 (FTGNPSGSQSQEIN). Residues 165 to 183 (SGSGAPTGAATGSGSGSGS) show a composition bias toward gly residues.

This is an uncharacterized protein from Dictyostelium discoideum (Social amoeba).